A 2254-amino-acid chain; its full sequence is Acetyl-CoA carboxylase 1 (2254 aa).

The Biotin carboxylation domain occupies Pro36–Ala543. In terms of domain architecture, ATP-grasp spans Asn189–Met381. Cys215 to Leu272 provides a ligand contact to ATP. Mg(2+)-binding residues include Glu338, Glu352, and Asn354. Mn(2+)-binding residues include Glu338, Glu352, and Asn354. Residue Arg356 is part of the active site. Residues Leu670–Asp744 form the Biotinyl-binding domain. At Lys711 the chain carries N6-biotinyllysine. Phosphothreonine is present on Thr1031. Ser1192 bears the Phosphoserine mark. One can recognise a CoA carboxyltransferase N-terminal domain in the interval Gln1492–Ala1831. The interval Gln1492–Glu2150 is carboxyltransferase. Arg1740, Lys2041, and Arg2043 together coordinate CoA. Residues Pro1835–Glu2150 form the CoA carboxyltransferase C-terminal domain.

As to quaternary structure, homodimer. The cofactor is biotin. Mg(2+) serves as cofactor. It depends on Mn(2+) as a cofactor. Expressed in roots, trichomes, epidermal leaf cells, siliques, petals, anthers, and seeds.

It localises to the cytoplasm. Its subcellular location is the cytosol. It carries out the reaction hydrogencarbonate + acetyl-CoA + ATP = malonyl-CoA + ADP + phosphate + H(+). The catalysed reaction is N(6)-biotinyl-L-lysyl-[protein] + hydrogencarbonate + ATP = N(6)-carboxybiotinyl-L-lysyl-[protein] + ADP + phosphate + H(+). The protein operates within lipid metabolism; malonyl-CoA biosynthesis; malonyl-CoA from acetyl-CoA: step 1/1. Functionally, multifunctional enzyme that catalyzes the carboxylation of acetyl-CoA, forming malonyl-CoA, which is used in the plastid for fatty acid synthesis and in the cytosol in various biosynthetic pathways including fatty acid elongation. Required for very long chain fatty acids elongation. Necessary for embryo and plant development. Plays a central function in embryo morphogenesis, especially in apical meristem development. Involved in cell proliferation and tissue patterning. May act as a repressor of cytokinin response. The sequence is that of Acetyl-CoA carboxylase 1 (ACC1) from Arabidopsis thaliana (Mouse-ear cress).